Here is a 434-residue protein sequence, read N- to C-terminus: ATP-dependent protease ATPase subunit HslU (434 aa).

Residues I18, 60–65, D247, E312, and R384 each bind ATP; that span reads GVGKTE.

This sequence belongs to the ClpX chaperone family. HslU subfamily. In terms of assembly, a double ring-shaped homohexamer of HslV is capped on each side by a ring-shaped HslU homohexamer. The assembly of the HslU/HslV complex is dependent on binding of ATP.

The protein localises to the cytoplasm. Functionally, ATPase subunit of a proteasome-like degradation complex; this subunit has chaperone activity. The binding of ATP and its subsequent hydrolysis by HslU are essential for unfolding of protein substrates subsequently hydrolyzed by HslV. HslU recognizes the N-terminal part of its protein substrates and unfolds these before they are guided to HslV for hydrolysis. This Brucella ovis (strain ATCC 25840 / 63/290 / NCTC 10512) protein is ATP-dependent protease ATPase subunit HslU.